A 438-amino-acid chain; its full sequence is Aspartate--tRNA(Asp) ligase (438 aa).

Residue E170 participates in L-aspartate binding. The interval Q192 to K195 is aspartate. Residue R214 coordinates L-aspartate. ATP-binding positions include R214–E216, R222–L224, and E361. Residues E361 and S364 each coordinate Mg(2+). L-aspartate-binding residues include S364 and R368. G409–R412 contacts ATP.

It belongs to the class-II aminoacyl-tRNA synthetase family. Type 2 subfamily. As to quaternary structure, homodimer. The cofactor is Mg(2+).

The protein resides in the cytoplasm. It catalyses the reaction tRNA(Asp) + L-aspartate + ATP = L-aspartyl-tRNA(Asp) + AMP + diphosphate. Functionally, catalyzes the attachment of L-aspartate to tRNA(Asp) in a two-step reaction: L-aspartate is first activated by ATP to form Asp-AMP and then transferred to the acceptor end of tRNA(Asp). The protein is Aspartate--tRNA(Asp) ligase of Pyrococcus furiosus (strain ATCC 43587 / DSM 3638 / JCM 8422 / Vc1).